The sequence spans 152 residues: UPF0178 protein swp_1285 (152 aa).

It belongs to the UPF0178 family.

The chain is UPF0178 protein swp_1285 from Shewanella piezotolerans (strain WP3 / JCM 13877).